The chain runs to 753 residues: Lysyl oxidase homolog 3 (753 aa).

Residues 1–25 (MRPVSVWQWSPWGLLLCLLCSSCLG) form the signal peptide. SRCR domains are found at residues 44–145 (FRLA…VICK) and 169–282 (VRIR…VSCV). 6 cysteine pairs are disulfide-bonded: C70/C134, C83/C144, C114/C124, C201/C271, C214/C281, and C248/C258. N-linked (GlcNAc...) asparagine glycosylation is present at N111. N266 carries an N-linked (GlcNAc...) asparagine glycan. A compositionally biased stretch (low complexity) spans 290 to 302 (SSGQKKQQQSKPQ). The tract at residues 290–315 (SSGQKKQQQSKPQGEARVRLKGGAHP) is disordered. SRCR domains follow at residues 307–407 (VRLK…VRCN) and 417–525 (IRLS…VICS). 11 disulfide bridges follow: C332–C396, C345–C406, C376–C386, C446–C511, C459–C524, C492–C502, C554–C560, C606–C654, C638–C644, C666–C676, and C713–C727. N-linked (GlcNAc...) asparagine glycosylation is found at N390 and N481. The interval 529-732 (SDLLLHSALV…WVHNCHIGDA (204 aa)) is lysyl-oxidase like. Cu cation-binding residues include H607, H609, and H611. A glycan (N-linked (GlcNAc...) asparagine) is linked at N625. Positions 634-670 (KASFCLEDTECQEDVSKRYECANFGEQGITVGCWDLY) form a cross-link, lysine tyrosylquinone (Lys-Tyr). Y670 carries the post-translational modification 2',4',5'-topaquinone.

This sequence belongs to the lysyl oxidase family. Interacts with STAT3. Requires Cu cation as cofactor. It depends on lysine tyrosylquinone residue as a cofactor. In terms of processing, the lysine tyrosylquinone cross-link (LTQ) is generated by condensation of the epsilon-amino group of a lysine with a topaquinone produced by oxidation of tyrosine. In terms of tissue distribution, isoform 1: Predominantly detected in the heart, placenta, lung, and small intestine. Isoform 2: Highly detected in the kidney, pancreas, spleen, and thymus, and is absent in lung. In eye, present in all layers of corneas as well as in the limbus and conjunctiva (at protein level).

The protein resides in the secreted. Its subcellular location is the extracellular space. It is found in the cytoplasm. It localises to the nucleus. The catalysed reaction is L-lysyl-[protein] + O2 + H2O = (S)-2-amino-6-oxohexanoyl-[protein] + H2O2 + NH4(+). The enzyme catalyses N(6)-acetyl-L-lysyl-[protein] + O2 + H2O = acetamide + (S)-2-amino-6-oxohexanoyl-[protein] + H2O2. Functionally, protein-lysine 6-oxidase that mediates the oxidation of peptidyl lysine residues to allysine in target proteins. Catalyzes the post-translational oxidative deamination of peptidyl lysine residues in precursors of elastin and different types of collagens, a prerequisite in the formation of cross-links between collagens and elastin. Required for somite boundary formation by catalyzing oxidation of fibronectin (FN1), enhancing integrin signaling in myofibers and their adhesion to the myotendinous junction (MTJ). Acts as a regulator of inflammatory response by inhibiting differentiation of naive CD4(+) T-cells into T-helper Th17 or regulatory T-cells (Treg): acts by interacting with STAT3 in the nucleus and catalyzing both deacetylation and oxidation of lysine residues on STAT3, leading to disrupt STAT3 dimerization and inhibit STAT3 transcription activity. Oxidation of lysine residues to allysine on STAT3 preferentially takes place on lysine residues that are acetylated. Also able to catalyze deacetylation of lysine residues on STAT3. Shows protein-lysine 6-oxidase activity toward elastin and different types of collagens, with the highest activity toward collagen type VIII. In terms of biological role, shows protein-lysine 6-oxidase activity toward elastin and different types of collagens, with the highest activity toward collagen type IV. In Homo sapiens (Human), this protein is Lysyl oxidase homolog 3.